A 667-amino-acid chain; its full sequence is Beta-galactosidase LacZ (667 aa).

R109 serves as a coordination point for substrate. C113 provides a ligand contact to Zn(2+). N147 contacts substrate. E148 functions as the Proton donor in the catalytic mechanism. Zn(2+) contacts are provided by C153, C155, and C158. Residue E307 is the Nucleophile of the active site. Residues W315 and 355 to 358 contribute to the substrate site; that span reads EKFH.

It belongs to the glycosyl hydrolase 42 family.

It carries out the reaction Hydrolysis of terminal non-reducing beta-D-galactose residues in beta-D-galactosides.. Functionally, catalyzes the hydrolysis of lactose to its constituent monosaccharides glucose and galactose. This chain is Beta-galactosidase LacZ, found in Lactobacillus acidophilus (strain ATCC 700396 / NCK56 / N2 / NCFM).